A 566-amino-acid chain; its full sequence is Intracellular exo-alpha-(1-&gt;5)-L-arabinofuranosidase (566 aa).

Over residues 1–12 the composition is skewed to polar residues; that stretch reads MTTHNSQYSAET. Residues 1-39 are disordered; it reads MTTHNSQYSAETTHPDKQESSPAPTAAGTTASNVSTTGN. Over residues 20 to 32 the composition is skewed to low complexity; that stretch reads SSPAPTAAGTTAS. Positions 69, 114, and 214 each coordinate alpha-L-arabinofuranose. The active-site Proton donor/acceptor is E215. Residues Y286, E340, and Q409 each coordinate alpha-L-arabinofuranose. Residue E340 is the Nucleophile of the active site.

It belongs to the glycosyl hydrolase 51 family. In terms of assembly, homohexamer; trimer of dimers.

It localises to the cytoplasm. The catalysed reaction is Hydrolysis of terminal non-reducing alpha-L-arabinofuranoside residues in alpha-L-arabinosides.. It participates in glycan metabolism; L-arabinan degradation. Completely inhibited by Hg(2+) and Cu(2+) ions, whereas 1 mM Zn(2+) inhibited activity by 51%. In terms of biological role, involved in the degradation of arabinan and is a key enzyme in the complete degradation of the plant cell wall. Catalyzes the cleavage of terminal alpha-(1-&gt;5)-arabinofuranosyl bonds in different hemicellulosic homopolysaccharides (branched and debranched arabinans). It is active with sugar beet arabinan and wheat arabinoxylan. It also exhibited activity against alpha-(1-&gt;5)-linked arabinobiose, arabinotriose, arabinotetraose, and arabinopentaose. The protein is Intracellular exo-alpha-(1-&gt;5)-L-arabinofuranosidase (abfB) of Bifidobacterium longum.